The following is a 330-amino-acid chain: Tyrosine-protein phosphatase yvh1 (330 aa).

Positions 45–187 (NDLSEISKNL…LRVYFECNYQ (143 aa)) constitute a Tyrosine-protein phosphatase domain. The Phosphocysteine intermediate role is filled by cysteine 131.

This sequence belongs to the protein-tyrosine phosphatase family. Non-receptor class dual specificity subfamily.

It localises to the cytoplasm. It is found in the nucleus. It catalyses the reaction O-phospho-L-tyrosyl-[protein] + H2O = L-tyrosyl-[protein] + phosphate. May be directly involved in signal transduction and/or cell cycle regulation. It is necessary for maintaining growth rate or spore germination. Could show both activity toward tyrosine-protein phosphate as well as with serine-protein phosphate. The protein is Tyrosine-protein phosphatase yvh1 (yvh1) of Schizosaccharomyces pombe (strain 972 / ATCC 24843) (Fission yeast).